The sequence spans 1488 residues: MIERGKFRSLTLINWNGFFARTFDLDELVTTLSGGNGAGKSTTMAAFVTALIPDLTLLHFRNTTEAGATSGSRDKGLHGKLKAGVCYSMLDTINSRHQRVVVGVRLQQVAGRDRKVDIKPFAIQGLPMSVQPTQLVTETLNERQARVLSLAELKDKLDEMEGVQFKQFNSITDYHSLMFDLGIIARRLRSASDRSKFYRLIEASLYGGISSAITRSLRDYLLPENSGVRKAFQDMEAALRENRLTLEAIRVTQSDRDLFKHLISEATDYVAADYMRHANERRVHLDQALAFRRELYTSRKQLAAEQYKHVDMARELGEHNGAEGSLEADYQAASDHLNLVQTALRQQEKIERYEADLEELQIRLEEQNEVVAEAAEMQDENEARAEAAELEVDELKSQLADYQQALDVQQTRAIQYNQAISALARAKELCHLPDLTPESAAEWLDTFQAKEQEATEKLLSLEQKMSVAQTAHSQFEQAYQLVAAINGPLARSEAWDVARELLRDGVNQRHLAEQVQPLRMRLSELEQRLREQQEAERLLAEFCKRQGKNFDIDELEALHQELEARIASLSESVSSASEQRMALRQEQEQLQSRIQHLMQRAPVWLAAQNSLNQLSEQCGEEFTSSQEVTEYLQQLLEREREAIVERDEVGARKNAVDEEIERLSQPGGAEDQRLNALAERFGGVLLSEIYDDVSLEDAPYFSALYGPSRHAIVVPDLSQIAEQLEGLTDCPEDLYLIEGDPQSFDDSVFSVDELEKAVVVKIADRQWRYSRFPSLPIFGRAARENRIESLHAEREVLSERFATLSFDVQKTQRLHQAFSRFIGSHLSVAFEDDPEAEIRRLNGRRVELERALATHESDNQQQRLQFEQAKEGVSALNRLLPRLNLLADETLADRVDEIQERLDEAQEAARFVQQYGNQLAKLEPVVSVLQSDPEQFEQLKEDYAWSQQMQRDARQQAFALAEVVERRAHFSYSDSAEMLSGNSDLNEKLRQRLEQAEAERTRAREALRSHAAQLSQYSQVLASLKSSYDTKKELLNDLQRELQDIGVRADSGAEERARQRRDELHAQLSNNRSRRNQLEKALTFCEAEMENLTRKLRKLERDYHEMREQVVTAKAGWCAVMRMVKDNGVERRLHRRELAYLSADELRSMSDKALGALRLAVADNEHLRDVLRLSEDPKRPERKIQFFVAVYQHLRERIRQDIIRTDDPVEAIEQMEIELSRLTEELTSREQKLAISSRSVANIIRKTIQREQNRIRMLNQGLQSVSFGQVNSVRLNVNVRETHATLLDVLSEQQEQHQDLFNSNRLTFSEALAKLYQRLNPQIDMGQRTPQTIGEELLDYRNYLEMEVEVNRGSDGWLRAESGALSTGEAIGTGMSILVIVVQSWEDEARRLRGKDISPCRLLFLDEAARLDARSIATLFELCERLQMQLIIAAPENISPEKGTTYKLVRKVFQNTEHVHVVGLRGFAPQLPETLPGTQTEDTPSEAS.

ATP is bound at residue 34–41 (GGNGAGKS). Coiled coils occupy residues 326-418 (LEAD…QYNQ), 444-472 (LDTFQAKEQEATEKLLSLEQKMSVAQTAH), and 509-602 (RHLA…QRAP). Positions 666–783 (PGGAEDQRLN…SLPIFGRAAR (118 aa)) are flexible hinge. Coiled-coil stretches lie at residues 835 to 923 (EAEI…AKLE), 977 to 1116 (EMLS…AKAG), and 1209 to 1265 (VEAI…LQSV). Positions 1049-1074 (ADSGAEERARQRRDELHAQLSNNRSR) are disordered. Positions 1051–1065 (SGAEERARQRRDELH) are enriched in basic and acidic residues.

The protein belongs to the SMC family. MukB subfamily. As to quaternary structure, homodimerization via its hinge domain. Binds to DNA via its C-terminal region. Interacts, and probably forms a ternary complex, with MukE and MukF via its C-terminal region. The complex formation is stimulated by calcium or magnesium. Interacts with tubulin-related protein FtsZ.

The protein localises to the cytoplasm. It localises to the nucleoid. Plays a central role in chromosome condensation, segregation and cell cycle progression. Functions as a homodimer, which is essential for chromosome partition. Involved in negative DNA supercoiling in vivo, and by this means organize and compact chromosomes. May achieve or facilitate chromosome segregation by condensation DNA from both sides of a centrally located replisome during cell division. This is Chromosome partition protein MukB from Salmonella gallinarum (strain 287/91 / NCTC 13346).